The following is an 843-amino-acid chain: Tetratricopeptide repeat protein 7B (843 aa).

The stretch at Gln-97–Thr-131 is one TPR 1 repeat. Phosphoserine is present on residues Ser-160 and Ser-202. TPR repeat units lie at residues Glu-219–Arg-252, Ser-363–Glu-396, Phe-397–Asp-430, Thr-479–Asp-514, Gln-516–Asp-548, and Ala-549–Asn-582. Residues Ser-625, Ser-629, Ser-630, Ser-673, Ser-677, Ser-678, and Ser-681 each carry the phosphoserine modification. 4 TPR repeats span residues Ala-696–Ser-729, His-730–His-763, Lys-765–Ala-797, and His-798–Ser-831.

In terms of assembly, component of a phosphatidylinositol 4-kinase (PI4K) complex, composed of PI4KA, EFR3 (EFR3A or EFR3B), TTC7 (TTC7A or TTC7B) and HYCC (HYCC1 or HYCC2). Interacts with PI4KA, interaction is direct. Interacts with EFR3 (EFR3A or EFR3B), interaction is direct. Interacts with HYCC (HYCC1 or HYCC2), interaction is direct. Association with the PI4K complex is strongly reduced by TMEM150A.

The protein localises to the cytoplasm. It localises to the cytosol. Its subcellular location is the cell membrane. Component of a complex required to localize phosphatidylinositol 4-kinase (PI4K) to the plasma membrane. The complex acts as a regulator of phosphatidylinositol 4-phosphate (PtdIns(4)P) synthesis. In the complex, plays a central role in bridging PI4KA to EFR3B and HYCC1, via direct interactions. This chain is Tetratricopeptide repeat protein 7B, found in Mus musculus (Mouse).